A 118-amino-acid chain; its full sequence is Putative pterin-4-alpha-carbinolamine dehydratase (118 aa).

It belongs to the pterin-4-alpha-carbinolamine dehydratase family.

The enzyme catalyses (4aS,6R)-4a-hydroxy-L-erythro-5,6,7,8-tetrahydrobiopterin = (6R)-L-erythro-6,7-dihydrobiopterin + H2O. In Xanthomonas campestris pv. campestris (strain 8004), this protein is Putative pterin-4-alpha-carbinolamine dehydratase.